A 188-amino-acid chain; its full sequence is Peptidyl-tRNA hydrolase (188 aa).

Y14 contributes to the tRNA binding site. H19 (proton acceptor) is an active-site residue. Residues Y64, N66, and N112 each coordinate tRNA.

Belongs to the PTH family. In terms of assembly, monomer.

It localises to the cytoplasm. It catalyses the reaction an N-acyl-L-alpha-aminoacyl-tRNA + H2O = an N-acyl-L-amino acid + a tRNA + H(+). In terms of biological role, hydrolyzes ribosome-free peptidyl-tRNAs (with 1 or more amino acids incorporated), which drop off the ribosome during protein synthesis, or as a result of ribosome stalling. Catalyzes the release of premature peptidyl moieties from peptidyl-tRNA molecules trapped in stalled 50S ribosomal subunits, and thus maintains levels of free tRNAs and 50S ribosomes. The sequence is that of Peptidyl-tRNA hydrolase from Bacillus velezensis (strain DSM 23117 / BGSC 10A6 / LMG 26770 / FZB42) (Bacillus amyloliquefaciens subsp. plantarum).